The primary structure comprises 238 residues: Putative tyrosine-protein phosphatase OCA1 (238 aa).

Residues 1–43 (MTSKVGEYEDVPEDESRLTEENVSVPEEEVEDEDEEEDDDDDH) are disordered. Position 2 is an N-acetylthreonine (T2). S24 is subject to Phosphoserine. Positions 26-42 (PEEEVEDEDEEEDDDDD) are enriched in acidic residues. Residues 72–230 (NFCPVERYLY…LVKIDKNKAP (159 aa)) form the Tyrosine-protein phosphatase domain. C168 serves as the catalytic Phosphocysteine intermediate.

Belongs to the protein-tyrosine phosphatase family.

The protein localises to the cytoplasm. The enzyme catalyses O-phospho-L-tyrosyl-[protein] + H2O = L-tyrosyl-[protein] + phosphate. Its function is as follows. Putative tyrosine-protein phosphatase required for protection against superoxide stress. Involved in cell-cycle delay in response to linoleic acid hydroperoxide (LoaOOH). This chain is Putative tyrosine-protein phosphatase OCA1 (OCA1), found in Saccharomyces cerevisiae (strain YJM789) (Baker's yeast).